The primary structure comprises 373 residues: Protein CAF40 (373 aa).

The tract at residues 1–91 (MFSAQKPIYG…ANATRNNPNM (91 aa)) is disordered. Positions 11–22 (NGAGVNMGGGGP) are enriched in gly residues. The segment covering 50–88 (GGPMLMGNTPNNNNSNENGENNGNNGNNGGNDANATRNN) has biased composition (low complexity).

The protein belongs to the CNOT9 family. As to quaternary structure, subunit of the 1.0 MDa CCR4-NOT core complex that contains CCR4, CAF1, NOT1, NOT2, NOT3, NOT4, NOT5, CAF40 and CAF130. In the complex interacts with NOT1. The core complex probably is part of a less characterized 1.9 MDa CCR4-NOT complex.

It localises to the cytoplasm. The protein resides in the nucleus. Its function is as follows. Acts as a component of the CCR4-NOT core complex, which in the nucleus seems to be a general transcription factor, and in the cytoplasm the major mRNA deadenylase involved in mRNA turnover. The sequence is that of Protein CAF40 (CAF40) from Saccharomyces cerevisiae (strain ATCC 204508 / S288c) (Baker's yeast).